We begin with the raw amino-acid sequence, 344 residues long: Acireductone dioxygenase (344 aa).

4 residues coordinate Fe(2+): His92, His94, Glu98, and His137. Residues His92, His94, Glu98, and His137 each contribute to the Ni(2+) site.

The protein belongs to the acireductone dioxygenase (ARD) family. Requires Fe(2+) as cofactor. The cofactor is Ni(2+).

The protein resides in the cytoplasm. It localises to the nucleus. It carries out the reaction 1,2-dihydroxy-5-(methylsulfanyl)pent-1-en-3-one + O2 = 4-methylsulfanyl-2-oxobutanoate + formate + 2 H(+). It catalyses the reaction 1,2-dihydroxy-5-(methylsulfanyl)pent-1-en-3-one + O2 = 3-(methylsulfanyl)propanoate + CO + formate + 2 H(+). It participates in amino-acid biosynthesis; L-methionine biosynthesis via salvage pathway; L-methionine from S-methyl-5-thio-alpha-D-ribose 1-phosphate: step 5/6. Catalyzes 2 different reactions between oxygen and the acireductone 1,2-dihydroxy-3-keto-5-methylthiopentene (DHK-MTPene) depending upon the metal bound in the active site. Fe-containing acireductone dioxygenase (Fe-ARD) produces formate and 2-keto-4-methylthiobutyrate (KMTB), the alpha-ketoacid precursor of methionine in the methionine recycle pathway. Ni-containing acireductone dioxygenase (Ni-ARD) produces methylthiopropionate, carbon monoxide and formate, and does not lie on the methionine recycle pathway. In Leishmania major, this protein is Acireductone dioxygenase.